Consider the following 201-residue polypeptide: Small ribosomal subunit protein eS1 (201 aa).

It belongs to the eukaryotic ribosomal protein eS1 family.

The sequence is that of Small ribosomal subunit protein eS1 from Methanoregula boonei (strain DSM 21154 / JCM 14090 / 6A8).